The primary structure comprises 775 residues: MSVEEKARIGNSEEPIIIETGKYAKLTDGSVVVRQGGTAVLVTAVMSDEPITDVDFTPLAVDYRERASAYGRIPGGFTKREGKPTDREILVSRVIDRPIRPLFPEGFFHDVIITALTLSADDKYDPDVLAITGASAALHISRIPFEGPIAGVRVCRVNGEFVANPTYEQRKEADLDIVMAGTKDAIVMVEGGGKEIPEEVLADALFFGLDAIKEVIEAQERLREKVGKPKFEYQKVELPEDILKALEEECTPKILEAFNIKDKKERYSTLDKIVEEFIEAHQIPEELHFAVKYFYKKLESRLMREKVLKEGVRIDGRKPNEIRPIWIEVHPFERPHGNAIFTRGQTQAYVTVTLGTPDEALIIETIAEGEVFKRFMLHYSMPPFSVGEAKPWGPPRRREIGHGALAERAIEPLLPPEEEYPFIIRVVSDILESNGSTSMATVCGASLALFDAGVPMKDNKHVAGIAMGLILEKDRYVILSDILGDEDHLGDMDFKVAGTKDGITSVQMDIKVKGITKEIMLDALKQAREGRLYILEKMYEAIPEPRKEPHPYTPKVEVVDVPEEKAPLIIGPGGSTVKKIYDETGVKVWVGEQGKVYLFVFPGGDVEKAKQMIQDIVREVEVGAVYKGTITRVEPYGVFVELWPGKIGLLHVSKMAEPVRSATEKYKVGEEIIVKVLDLDELGRPRFTTIGIEDVGTEKKEVKPKVGDVYEGKVVRVEPYGAFIEYAPGKVGLLHVSKMKERVKDARQKYKVGDVVKVKVVEIDEQGRPKFTDDV.

Positions 487 and 493 each coordinate Mg(2+). The KH domain maps to 554–613 (PKVEVVDVPEEKAPLIIGPGGSTVKKIYDETGVKVWVGEQGKVYLFVFPGGDVEKAKQMI). S1 motif domains are found at residues 623–693 (GAVY…IGIE) and 707–775 (GDVY…TDDV).

The protein belongs to the polyribonucleotide nucleotidyltransferase family. The cofactor is Mg(2+).

It localises to the cytoplasm. It catalyses the reaction RNA(n+1) + phosphate = RNA(n) + a ribonucleoside 5'-diphosphate. In terms of biological role, involved in mRNA degradation. Catalyzes the phosphorolysis of single-stranded polyribonucleotides processively in the 3'- to 5'-direction. The polypeptide is Polyribonucleotide nucleotidyltransferase (Aquifex aeolicus (strain VF5)).